A 257-amino-acid polypeptide reads, in one-letter code: NAD kinase (257 aa).

D46 (proton acceptor) is an active-site residue. NAD(+)-binding positions include 46–47, H51, 116–117, D146, A154, 157–162, and Q218; these read DG, NE, and TAYNLS.

This sequence belongs to the NAD kinase family. It depends on a divalent metal cation as a cofactor.

It is found in the cytoplasm. The catalysed reaction is NAD(+) + ATP = ADP + NADP(+) + H(+). Its function is as follows. Involved in the regulation of the intracellular balance of NAD and NADP, and is a key enzyme in the biosynthesis of NADP. Catalyzes specifically the phosphorylation on 2'-hydroxyl of the adenosine moiety of NAD to yield NADP. In Rhizobium meliloti (strain 1021) (Ensifer meliloti), this protein is NAD kinase.